Consider the following 318-residue polypeptide: tRNA U34 carboxymethyltransferase (318 aa).

Residues Lys-88, Trp-102, Lys-107, Gly-126, 176–177 (LE), Met-192, Tyr-196, and Arg-311 each bind carboxy-S-adenosyl-L-methionine.

This sequence belongs to the class I-like SAM-binding methyltransferase superfamily. CmoB family. In terms of assembly, homotetramer.

The catalysed reaction is carboxy-S-adenosyl-L-methionine + 5-hydroxyuridine(34) in tRNA = 5-carboxymethoxyuridine(34) in tRNA + S-adenosyl-L-homocysteine + H(+). Functionally, catalyzes carboxymethyl transfer from carboxy-S-adenosyl-L-methionine (Cx-SAM) to 5-hydroxyuridine (ho5U) to form 5-carboxymethoxyuridine (cmo5U) at position 34 in tRNAs. In Pseudomonas putida (strain GB-1), this protein is tRNA U34 carboxymethyltransferase.